Here is a 264-residue protein sequence, read N- to C-terminus: Small ribosomal subunit protein eS1B (264 aa).

Basic residues predominate over residues 1–19 (MALGKNKRISKGGKRGKRG). The tract at residues 1-23 (MALGKNKRISKGGKRGKRGKAQE) is disordered.

Belongs to the eukaryotic ribosomal protein eS1 family. In terms of assembly, component of the small ribosomal subunit. Mature ribosomes consist of a small (40S) and a large (60S) subunit. The 40S subunit contains about 33 different proteins and 1 molecule of RNA (18S). The 60S subunit contains about 49 different proteins and 3 molecules of RNA (25S, 5.8S and 5S).

The protein resides in the cytoplasm. The sequence is that of Small ribosomal subunit protein eS1B from Leishmania infantum.